A 66-amino-acid polypeptide reads, in one-letter code: Large ribosomal subunit protein eL29 (66 aa).

Positions 1–14 (MAKSKNSTNKNQIS) are enriched in polar residues. Positions 1 to 66 (MAKSKNSTNK…KNLEKKVNKE (66 aa)) are disordered. The segment covering 15–31 (KSHRNGIKKPKDHRHIS) has biased composition (basic residues). The span at 47-66 (IKNDPSIKKSKNLEKKVNKE) shows a compositional bias: basic and acidic residues.

Belongs to the eukaryotic ribosomal protein eL29 family.

The protein resides in the cytoplasm. The chain is Large ribosomal subunit protein eL29 (RPL29) from Tetrahymena thermophila.